The following is a 141-amino-acid chain: Nucleoside diphosphate kinase (141 aa).

Lys11, Phe59, Arg87, Thr93, Arg104, and Asn114 together coordinate ATP. His117 acts as the Pros-phosphohistidine intermediate in catalysis.

The protein belongs to the NDK family. In terms of assembly, homotetramer. Requires Mg(2+) as cofactor.

Its subcellular location is the cytoplasm. It catalyses the reaction a 2'-deoxyribonucleoside 5'-diphosphate + ATP = a 2'-deoxyribonucleoside 5'-triphosphate + ADP. It carries out the reaction a ribonucleoside 5'-diphosphate + ATP = a ribonucleoside 5'-triphosphate + ADP. Its function is as follows. Major role in the synthesis of nucleoside triphosphates other than ATP. The ATP gamma phosphate is transferred to the NDP beta phosphate via a ping-pong mechanism, using a phosphorylated active-site intermediate. The sequence is that of Nucleoside diphosphate kinase from Burkholderia ambifaria (strain MC40-6).